A 330-amino-acid polypeptide reads, in one-letter code: Dipeptide transport ATP-binding protein DppD (330 aa).

An ABC transporter domain is found at 6-254 (VKELSVHFGD…PKHPYTQALL (249 aa)). 40–47 (GESGSGKS) lines the ATP pocket.

Belongs to the ABC transporter superfamily.

It is found in the cell inner membrane. The catalysed reaction is a dipeptide(out) + ATP + H2O = a dipeptide(in) + ADP + phosphate + H(+). Part of the ABC transporter DppBCDF involved in dipeptide transport. Responsible for energy coupling to the transport system. The polypeptide is Dipeptide transport ATP-binding protein DppD (dppD) (Haemophilus influenzae (strain ATCC 51907 / DSM 11121 / KW20 / Rd)).